We begin with the raw amino-acid sequence, 323 residues long: GDSL esterase/lipase At5g03980 (323 aa).

The signal sequence occupies residues 1 to 21 (MSTTKALSLLVFILFVSLVHS). The active-site Nucleophile is the Ser36. Asn77 is a glycosylation site (N-linked (GlcNAc...) asparagine). Residues Asp294 and His297 contribute to the active site.

This sequence belongs to the 'GDSL' lipolytic enzyme family.

The protein localises to the secreted. The sequence is that of GDSL esterase/lipase At5g03980 from Arabidopsis thaliana (Mouse-ear cress).